Here is a 736-residue protein sequence, read N- to C-terminus: 1,4-alpha-glucan branching enzyme GlgB (736 aa).

The active-site Nucleophile is Asp-415. The active-site Proton donor is the Glu-470.

Belongs to the glycosyl hydrolase 13 family. GlgB subfamily. Monomer.

It catalyses the reaction Transfers a segment of a (1-&gt;4)-alpha-D-glucan chain to a primary hydroxy group in a similar glucan chain.. The protein operates within glycan biosynthesis; glycogen biosynthesis. Its function is as follows. Catalyzes the formation of the alpha-1,6-glucosidic linkages in glycogen by scission of a 1,4-alpha-linked oligosaccharide from growing alpha-1,4-glucan chains and the subsequent attachment of the oligosaccharide to the alpha-1,6 position. In Burkholderia cenocepacia (strain HI2424), this protein is 1,4-alpha-glucan branching enzyme GlgB.